Here is a 152-residue protein sequence, read N- to C-terminus: Large ribosomal subunit protein bL17 (152 aa).

The interval 121–140 is disordered; it reads APSASQKTGKQDRAKRVKGS.

Belongs to the bacterial ribosomal protein bL17 family. As to quaternary structure, part of the 50S ribosomal subunit. Contacts protein L32.

In Pelodictyon phaeoclathratiforme (strain DSM 5477 / BU-1), this protein is Large ribosomal subunit protein bL17.